Reading from the N-terminus, the 120-residue chain is C-C motif chemokine 23 (120 aa).

The first 21 residues, 1-21 (MKVSVAALSCLMLVTALGSQA), serve as a signal peptide directing secretion. 3 cysteine pairs are disulfide-bonded: Cys54/Cys78, Cys55/Cys94, and Cys65/Cys105.

This sequence belongs to the intercrine beta (chemokine CC) family.

It is found in the secreted. In terms of biological role, shows chemotactic activity for monocytes, resting T-lymphocytes, and neutrophils, but not for activated lymphocytes. Inhibits proliferation of myeloid progenitor cells in colony formation assays. This protein can bind heparin. Binds CCR1. This is C-C motif chemokine 23 (CCL23) from Macaca mulatta (Rhesus macaque).